We begin with the raw amino-acid sequence, 737 residues long: Procollagen-lysine,2-oxoglutarate 5-dioxygenase 2 (737 aa).

A signal peptide spans Met-1–Gly-25. N-linked (GlcNAc...) asparagine glycosylation is found at Asn-63, Asn-209, and Asn-297. Thr-320 is subject to Phosphothreonine. Tyr-323 is subject to Phosphotyrosine. Residues Asn-365 and Asn-522 are each glycosylated (N-linked (GlcNAc...) asparagine). A Fe2OG dioxygenase domain is found at Lys-644–Pro-737. Residues His-666 and Asp-668 each contribute to the Fe cation site. The N-linked (GlcNAc...) asparagine glycan is linked to Asn-696. Position 704 is an N6-succinyllysine (Lys-704). Position 718 (His-718) interacts with Fe cation. N-linked (GlcNAc...) asparagine glycosylation is present at Asn-725. The active site involves Arg-728.

As to quaternary structure, homodimer. Requires Fe(2+) as cofactor. L-ascorbate serves as cofactor. In terms of tissue distribution, highly expressed in pancreas and muscle. Isoform 1 and isoform 2 are expressed in the majority of the examined cell types. Isoform 2 is specifically expressed in skin, lung, dura and aorta.

It is found in the rough endoplasmic reticulum membrane. It carries out the reaction L-lysyl-[collagen] + 2-oxoglutarate + O2 = (5R)-5-hydroxy-L-lysyl-[collagen] + succinate + CO2. Forms hydroxylysine residues in -Xaa-Lys-Gly- sequences in collagens. These hydroxylysines serve as sites of attachment for carbohydrate units and are essential for the stability of the intermolecular collagen cross-links. This Homo sapiens (Human) protein is Procollagen-lysine,2-oxoglutarate 5-dioxygenase 2.